The primary structure comprises 129 residues: UPF0225 protein XOO0258 (129 aa).

It belongs to the UPF0225 family.

This Xanthomonas oryzae pv. oryzae (strain MAFF 311018) protein is UPF0225 protein XOO0258.